Reading from the N-terminus, the 149-residue chain is VapC ribonuclease PF0355 (149 aa).

A PINc domain is found at 8–122 (TFDSLALIKM…ITDDSKRYEP (115 aa)). Mg(2+) contacts are provided by aspartate 10 and aspartate 98.

This sequence belongs to the PINc/VapC protein family. It depends on Mg(2+) as a cofactor.

In terms of biological role, toxic component of a type II toxin-antitoxin (TA) system. An RNase. The sequence is that of VapC ribonuclease PF0355 from Pyrococcus furiosus (strain ATCC 43587 / DSM 3638 / JCM 8422 / Vc1).